The following is a 327-amino-acid chain: MRVLGIETSCDETAVAVLDDGKDVIVNFTVSQVEVHRKFGGVVPEVAARHHLKNLPFLLKETFKKVDPQTVDVVAATYGPGLVGALLVGLSAAKGLSISLKRPFVGVNHIEAHVHAVFLANPTLTPPFVVLMVSGGHTQLMKVNEDYSMEILGRTLDDSAGEAFDKVARLLGLGYPGGPIIDEVAKKGDPKKYSFPRPMMDEPNYNFSFAGLKTAVLYFLKKEKDYRVEDVAASFQEAVVDILVEKTFRLARNLGIRKIAFVGGVAANSRLREKVNDRAKRWGYEVFFPPLSLCTDNALMVARAGYEKAKRGIFFPLYLNADPNLSV.

Fe cation is bound by residues histidine 109 and histidine 113. Substrate contacts are provided by residues 132–136 (MVSGG), aspartate 165, glycine 178, aspartate 182, and asparagine 268. Aspartate 296 lines the Fe cation pocket.

The protein belongs to the KAE1 / TsaD family. Fe(2+) serves as cofactor.

Its subcellular location is the cytoplasm. The catalysed reaction is L-threonylcarbamoyladenylate + adenosine(37) in tRNA = N(6)-L-threonylcarbamoyladenosine(37) in tRNA + AMP + H(+). In terms of biological role, required for the formation of a threonylcarbamoyl group on adenosine at position 37 (t(6)A37) in tRNAs that read codons beginning with adenine. Is involved in the transfer of the threonylcarbamoyl moiety of threonylcarbamoyl-AMP (TC-AMP) to the N6 group of A37, together with TsaE and TsaB. TsaD likely plays a direct catalytic role in this reaction. The polypeptide is tRNA N6-adenosine threonylcarbamoyltransferase (Thermotoga neapolitana (strain ATCC 49049 / DSM 4359 / NBRC 107923 / NS-E)).